We begin with the raw amino-acid sequence, 73 residues long: Large ribosomal subunit protein bL31 (73 aa).

The protein belongs to the bacterial ribosomal protein bL31 family. Type A subfamily. Part of the 50S ribosomal subunit.

Its function is as follows. Binds the 23S rRNA. The sequence is that of Large ribosomal subunit protein bL31 from Allorhizobium ampelinum (strain ATCC BAA-846 / DSM 112012 / S4) (Agrobacterium vitis (strain S4)).